The chain runs to 130 residues: Metastasis-suppressor KiSS-1 (130 aa).

A signal peptide spans 1–19 (MISLASWQLLLLLCVASFG). The tract at residues 52-91 (RYAESKPGAAGLRARRTSPCPPVENPTGHQRPPCATRSRL) is disordered. A disulfide bridge links C71 with C85. A Phosphotyrosine modification is found at Y110. An essential for receptor binding and receptor activation region spans residues 110 to 119 (YNWNSFGLRY). Y119 is subject to Tyrosine amide.

The protein belongs to the KISS1 family. Highest levels in the cecum and colon. Moderate levels present in the liver, spleen, kidney, ovary, uterus and small intestine. Low levels in the stomach, pancreas and placenta. Expressed only moderately in the placenta. Persistent expression is detected in hypothalamus throughout postnatal development, with maximum expression levels at puberty in both male and female. Hypothalamic expression is sensitive to neonatal imprinting by estrogen. Expression is higher in the hypothalamus than in the brainstem and spinal cord. In the brain, metastin-like immunoreactivity is found mainly in three groups of cells: dorsomedial hypothalamic nucleus, nucleus of the solitary tract, and caudal ventrolateral medulla.

The protein resides in the secreted. Functionally, metastasis suppressor protein. May regulate events downstream of cell-matrix adhesion, perhaps involving cytoskeletal reorganization. Generates a C-terminally amidated peptide, metastin which functions as the endogenous ligand of the G-protein coupled receptor GPR54. The receptor is also essential for normal gonadotropin-released hormone physiology and for puberty. The hypothalamic KiSS1/GPR54 system is a pivotal factor in central regulation of the gonadotropic axis at puberty and in adulthood. Intracerebroventricular administration induces an increase in serum LH and FSH levels in prepubertal male and female as well as in adult animals. This chain is Metastasis-suppressor KiSS-1 (Kiss1), found in Rattus norvegicus (Rat).